Consider the following 596-residue polypeptide: Probable ATP-dependent RNA helicase DDX52 (596 aa).

Position 15 is an N6-acetyllysine (Lys15). At Ser39 the chain carries Phosphoserine. The disordered stretch occupies residues 68–94 (LPDEEKTEESQIERKKQNRKKKKITSE). Positions 163–191 (QLDQEYKINSRLLQNILDAGFQTPTPIQM) match the Q motif motif. The Helicase ATP-binding domain occupies 194-372 (IPVMLHGREL…RLNLDSVITV (179 aa)). 207-214 (APTGSGKT) provides a ligand contact to ATP. A DEAD box motif is present at residues 316–319 (DESD). The region spanning 383-544 (TVEQELLFVG…PVPEYIKGFQ (162 aa)) is the Helicase C-terminal domain. Positions 575-596 (AKDKRKKVTGQNKKKVAPEDKS) are disordered. A compositionally biased stretch (basic residues) spans 577 to 589 (DKRKKVTGQNKKK).

It belongs to the DEAD box helicase family. DDX52/ROK1 subfamily.

It is found in the nucleus. Its subcellular location is the nucleolus. The enzyme catalyses ATP + H2O = ADP + phosphate + H(+). The sequence is that of Probable ATP-dependent RNA helicase DDX52 (DDX52) from Bos taurus (Bovine).